The sequence spans 344 residues: Holliday junction branch migration complex subunit RuvB (344 aa).

Residues 1 to 183 (MPDRELISGD…FGLVLRLDPY (183 aa)) are large ATPase domain (RuvB-L). Residues L22, R23, G64, K67, T68, T69, 130-132 (EDF), R173, Y183, and R220 each bind ATP. A Mg(2+)-binding site is contributed by T68. The interval 184 to 254 (NTEELKAIVK…VAQTALNLLD (71 aa)) is small ATPAse domain (RuvB-S). Positions 257-344 (RYGLDEIDQK…EGDHPSLFEA (88 aa)) are head domain (RuvB-H). Residues R312 and R317 each coordinate DNA.

The protein belongs to the RuvB family. Homohexamer. Forms an RuvA(8)-RuvB(12)-Holliday junction (HJ) complex. HJ DNA is sandwiched between 2 RuvA tetramers; dsDNA enters through RuvA and exits via RuvB. An RuvB hexamer assembles on each DNA strand where it exits the tetramer. Each RuvB hexamer is contacted by two RuvA subunits (via domain III) on 2 adjacent RuvB subunits; this complex drives branch migration. In the full resolvosome a probable DNA-RuvA(4)-RuvB(12)-RuvC(2) complex forms which resolves the HJ.

The protein resides in the cytoplasm. It carries out the reaction ATP + H2O = ADP + phosphate + H(+). The RuvA-RuvB-RuvC complex processes Holliday junction (HJ) DNA during genetic recombination and DNA repair, while the RuvA-RuvB complex plays an important role in the rescue of blocked DNA replication forks via replication fork reversal (RFR). RuvA specifically binds to HJ cruciform DNA, conferring on it an open structure. The RuvB hexamer acts as an ATP-dependent pump, pulling dsDNA into and through the RuvAB complex. RuvB forms 2 homohexamers on either side of HJ DNA bound by 1 or 2 RuvA tetramers; 4 subunits per hexamer contact DNA at a time. Coordinated motions by a converter formed by DNA-disengaged RuvB subunits stimulates ATP hydrolysis and nucleotide exchange. Immobilization of the converter enables RuvB to convert the ATP-contained energy into a lever motion, pulling 2 nucleotides of DNA out of the RuvA tetramer per ATP hydrolyzed, thus driving DNA branch migration. The RuvB motors rotate together with the DNA substrate, which together with the progressing nucleotide cycle form the mechanistic basis for DNA recombination by continuous HJ branch migration. Branch migration allows RuvC to scan DNA until it finds its consensus sequence, where it cleaves and resolves cruciform DNA. The polypeptide is Holliday junction branch migration complex subunit RuvB (Solibacter usitatus (strain Ellin6076)).